We begin with the raw amino-acid sequence, 555 residues long: Formate--tetrahydrofolate ligase (555 aa).

Residue 65 to 72 (TPAGEGKT) coordinates ATP.

It belongs to the formate--tetrahydrofolate ligase family.

It catalyses the reaction (6S)-5,6,7,8-tetrahydrofolate + formate + ATP = (6R)-10-formyltetrahydrofolate + ADP + phosphate. The protein operates within one-carbon metabolism; tetrahydrofolate interconversion. The polypeptide is Formate--tetrahydrofolate ligase (Thermoanaerobacter pseudethanolicus (strain ATCC 33223 / 39E) (Clostridium thermohydrosulfuricum)).